The sequence spans 373 residues: 2-oxoglutarate oxidoreductase subunit KorB (373 aa).

The interval 26-50 (TPSLTKNAGVPTTDQPQKGKDFTSD) is disordered. A compositionally biased stretch (polar residues) spans 27 to 41 (PSLTKNAGVPTTDQP).

KG oxidoreductase (KOR) is composed of KorA and KorB subunits. It depends on Mg(2+) as a cofactor.

It catalyses the reaction 2 oxidized [2Fe-2S]-[ferredoxin] + 2-oxoglutarate + CoA = succinyl-CoA + 2 reduced [2Fe-2S]-[ferredoxin] + CO2 + H(+). The protein operates within carbohydrate metabolism; tricarboxylic acid cycle. Functionally, component of KG oxidoreductase (KOR) that catalyzes the CoA-dependent oxidative decarboxylation of 2-oxoglutarate (alpha-ketoglutarate, KG) to succinyl-CoA. Methyl viologen can act as electron acceptor in vitro; the physiologic electron acceptor is unknown. Is involved in the alternative TCA pathway that functions concurrently with fatty acid beta-oxidation. Since a growing body of evidence indicates that lipids (for example cholesterol and fatty acids) are a predominant growth substrate for M.tuberculosis during infection, flux through KOR likely represents an important step in intermediary metabolism in vivo. KOR-dependent decarboxylation of KG also appears to be an important source of CO(2) in M.tuberculosis metabolism. The chain is 2-oxoglutarate oxidoreductase subunit KorB (korB) from Mycobacterium tuberculosis (strain ATCC 25618 / H37Rv).